Reading from the N-terminus, the 55-residue chain is Large ribosomal subunit protein bL33 (55 aa).

The protein belongs to the bacterial ribosomal protein bL33 family.

The sequence is that of Large ribosomal subunit protein bL33 from Deinococcus deserti (strain DSM 17065 / CIP 109153 / LMG 22923 / VCD115).